Consider the following 359-residue polypeptide: Histidinol-phosphate aminotransferase (359 aa).

Lysine 217 carries the post-translational modification N6-(pyridoxal phosphate)lysine.

The protein belongs to the class-II pyridoxal-phosphate-dependent aminotransferase family. Histidinol-phosphate aminotransferase subfamily. Homodimer. Pyridoxal 5'-phosphate is required as a cofactor.

The catalysed reaction is L-histidinol phosphate + 2-oxoglutarate = 3-(imidazol-4-yl)-2-oxopropyl phosphate + L-glutamate. Its pathway is amino-acid biosynthesis; L-histidine biosynthesis; L-histidine from 5-phospho-alpha-D-ribose 1-diphosphate: step 7/9. This Salmonella arizonae (strain ATCC BAA-731 / CDC346-86 / RSK2980) protein is Histidinol-phosphate aminotransferase.